The chain runs to 482 residues: Signal recognition particle protein (482 aa).

GTP is bound by residues 107–114 (GLQGTGKT), 189–193 (DTAGR), and 247–250 (TKLD). 2 disordered regions span residues 380–413 (MTTE…TDVS) and 452–482 (FGGQ…FGQL). The span at 452–468 (FGGQPGPGFRGYRGGGG) shows a compositional bias: gly residues. Residues 469–482 (KPKKKKKKKGFGQL) show a composition bias toward basic residues.

It belongs to the GTP-binding SRP family. SRP54 subfamily. As to quaternary structure, part of the signal recognition particle protein translocation system, which is composed of SRP and FtsY.

Its subcellular location is the cytoplasm. The enzyme catalyses GTP + H2O = GDP + phosphate + H(+). Its function is as follows. Involved in targeting and insertion of nascent membrane proteins into the cytoplasmic membrane. Binds to the hydrophobic signal sequence of the ribosome-nascent chain (RNC) as it emerges from the ribosomes. The SRP-RNC complex is then targeted to the cytoplasmic membrane where it interacts with the SRP receptor FtsY. In Synechocystis sp. (strain ATCC 27184 / PCC 6803 / Kazusa), this protein is Signal recognition particle protein.